The sequence spans 1224 residues: DNA-directed RNA polymerase subunit beta (1224 aa).

It belongs to the RNA polymerase beta chain family. In terms of assembly, the RNAP catalytic core consists of 2 alpha, 1 beta, 1 beta' and 1 omega subunit. When a sigma factor is associated with the core the holoenzyme is formed, which can initiate transcription.

It carries out the reaction RNA(n) + a ribonucleoside 5'-triphosphate = RNA(n+1) + diphosphate. Functionally, DNA-dependent RNA polymerase catalyzes the transcription of DNA into RNA using the four ribonucleoside triphosphates as substrates. The protein is DNA-directed RNA polymerase subunit beta of Pelotomaculum thermopropionicum (strain DSM 13744 / JCM 10971 / SI).